The primary structure comprises 259 residues: Protein odd-skipped-related 1 (259 aa).

3 consecutive C2H2-type zinc fingers follow at residues 168 to 190 (FVCK…ERTH), 196 to 218 (YTCD…RYIH), and 224 to 246 (FKCQ…KTLH).

The protein belongs to the Odd C2H2-type zinc-finger protein family. At early gastrula stage, expressed in the involuting mesoderm and endoderm. During neurulation, expressed in the pronephric primordium, following expression of osr2. During tailbud (stage 35), expressed in the rectal diverticulum and in the kidney ducts.

The protein localises to the nucleus. Transcriptional repressor. Required for pronephric kidney development. The chain is Protein odd-skipped-related 1 from Xenopus laevis (African clawed frog).